A 562-amino-acid chain; its full sequence is Berberine bridge enzyme-like C-1 (562 aa).

A signal peptide spans 1 to 19 (MFPLIILISFSFTFLSASA). N-linked (GlcNAc...) asparagine glycans are attached at residues Asn-29 and Asn-41. Cys-33 and Cys-90 are oxidised to a cystine. Residues 68–244 (NMPKPTVIIL…YAWKIRLVKV (177 aa)) enclose the FAD-binding PCMH-type domain. His-105 bears the Pros-8alpha-FAD histidine mark. 3 N-linked (GlcNAc...) asparagine glycosylation sites follow: Asn-359, Asn-498, and Asn-558.

Belongs to the oxygen-dependent FAD-linked oxidoreductase family. It depends on FAD as a cofactor. As to expression, mostly expressed in roots.

The protein resides in the vacuole. It functions in the pathway alkaloid biosynthesis; nicotine biosynthesis. Its function is as follows. Involved in the biosynthesis of pyridine alkaloid natural products, leading mainly to the production of anabasine, anatabine, nicotine and nornicotine, effective deterrents against herbivores with antiparasitic and pesticide properties (neurotoxins); nornicotine serves as the precursor in the synthesis of the carcinogen compound N'-nitrosonornicotine (NNN). Catalyzes a late oxidation step subsequent to the pyridine ring condensation reaction in the biosynthesis of alkaloids. This Nicotiana tabacum (Common tobacco) protein is Berberine bridge enzyme-like C-1.